The sequence spans 257 residues: Nickel import system ATP-binding protein NikD (257 aa).

Residues 4–245 enclose the ABC transporter domain; that stretch reads IDIQNLTIKN…HLHPYTERLI (242 aa). 37–44 provides a ligand contact to ATP; the sequence is GESGAGKS.

Belongs to the ABC transporter superfamily. The complex is composed of two ATP-binding proteins (NikD and NikE), two transmembrane proteins (NikB and NikC) and a solute-binding protein (NikA).

The protein localises to the cell membrane. The catalysed reaction is Ni(2+)(out) + ATP + H2O = Ni(2+)(in) + ADP + phosphate + H(+). In terms of biological role, part of the ABC transporter complex NikABCDE (Opp2) involved in nickel import. Probably responsible for energy coupling to the transport system. The protein is Nickel import system ATP-binding protein NikD of Staphylococcus aureus (strain Mu50 / ATCC 700699).